A 207-amino-acid chain; its full sequence is Basic helix-loop-helix transcription factor scleraxis (207 aa).

Disordered regions lie at residues 1–91 and 151–183; these read MSFA…RDRT and AFFH…QPKQ. A compositionally biased stretch (basic and acidic residues) spans 73 to 91; sequence PGREPRQRHTANARERDRT. Residues 78–130 form the bHLH domain; it reads RQRHTANARERDRTNSVNTAFTALRTLIPTEPADRKLSKIETLRLASSYISHL. Positions 161-171 are enriched in pro residues; that stretch reads PLPPPPPPPPL.

As to quaternary structure, efficient DNA binding requires dimerization with another bHLH protein. Dimerizes and binds the E-box consensus sequence with E12. As to expression, expressed in mesenchymal precursors of cartilage and in connective tissue. Highly expressed in tendons in the limb, tongue and diaphragm and in cartilage of the bronchi.

The protein resides in the nucleus. In terms of biological role, plays an early essential role in mesoderm formation, as well as a later role in formation of somite-derived chondrogenic lineages. In Mus musculus (Mouse), this protein is Basic helix-loop-helix transcription factor scleraxis (Scx).